The primary structure comprises 350 residues: Geranylgeranyl pyrophosphate synthase (350 aa).

Isopentenyl diphosphate is bound by residues lysine 66, arginine 69, and histidine 98. 2 residues coordinate Mg(2+): aspartate 105 and aspartate 109. Residue arginine 114 coordinates dimethylallyl diphosphate. Arginine 115 serves as a coordination point for isopentenyl diphosphate. Residues lysine 200, threonine 201, glutamine 236, asparagine 243, and lysine 263 each coordinate dimethylallyl diphosphate.

The protein belongs to the FPP/GGPP synthase family. Mg(2+) is required as a cofactor.

It catalyses the reaction isopentenyl diphosphate + dimethylallyl diphosphate = (2E)-geranyl diphosphate + diphosphate. It carries out the reaction isopentenyl diphosphate + (2E)-geranyl diphosphate = (2E,6E)-farnesyl diphosphate + diphosphate. The catalysed reaction is isopentenyl diphosphate + (2E,6E)-farnesyl diphosphate = (2E,6E,10E)-geranylgeranyl diphosphate + diphosphate. It functions in the pathway secondary metabolite biosynthesis; terpenoid biosynthesis. Functionally, geranylgeranyl pyrophosphate synthase; part of the gene cluster that mediates the biosynthesis of pleuromutilin, a tricyclic diterpene showing antibacterial properties. The geranylgeranyl diphosphate (GGPP) synthase catalyzes the first step in pleuromutilin biosynthesis. GGPP is then substrate of the premutilin synthase (PS) to yield premutilin. Premutilin synthase is a bifunctional enzyme composed of the fusion of a class II diterpene cyclase (DTC) and a class I diterpene synthase (DTS), with the corresponding domains and active sites containing characteristic aspartate-rich motifs. GGPP is first converted to mutildienyl-diphosphate (MPP) at the class II DTC site. MPP is subsequently further cyclized at the class I DTS site, followed by a 1,5-hydride shift and addition of water prior to terminating deprotonation, to yield premutilin. In addition to the aforementioned GGPP synthase and bifunctional diterpene synthase, the cluster also contains three cytochrome P450 monooxygenases, a short-chain alcohol dehydrogenase, and an acyltransferase, involved in the conversion of premutilin to pleuromutilin. The cytochrome P450 monooxygenases P450-1 and P450-2 hydroxylate premutilin at C-11 and C-3, respectively, producing 11-hydroxypremutilin and 3-hydroxypremutilin. The combination of the actions of both ple5 and ple6 leads to the production of 3,11-dihydroxypremutilin. The short chain dehydrogenase SDR further converts 3,11-dihydroxypremutilin into mutilin. The acetyltransferase ATF then acetylates mutilin to produce 14-O-acetylmutilin. Finally, the cytochrome P450 monooxygenase P450-3 catalyzes hydroxylation on the alpha position of the acetyl side chain of 14-O-acetylmutilin to yield pleuromutilin. The polypeptide is Geranylgeranyl pyrophosphate synthase (Clitopilus passeckerianus (Pleurotus passeckerianus)).